Consider the following 97-residue polypeptide: Cobalt transport protein CbiN (97 aa).

Transmembrane regions (helical) follow at residues 6-26 and 68-88; these read VLMI…YSGL and SLLF…FFGY.

It belongs to the CbiN family. In terms of assembly, forms an energy-coupling factor (ECF) transporter complex composed of an ATP-binding protein (A component, CbiO), a transmembrane protein (T component, CbiQ) and 2 possible substrate-capture proteins (S components, CbiM and CbiN) of unknown stoichimetry.

The protein localises to the cell membrane. It functions in the pathway cofactor biosynthesis; adenosylcobalamin biosynthesis. Part of the energy-coupling factor (ECF) transporter complex CbiMNOQ involved in cobalt import. In Methanococcus maripaludis (strain C7 / ATCC BAA-1331), this protein is Cobalt transport protein CbiN.